We begin with the raw amino-acid sequence, 368 residues long: Ribosomal RNA large subunit methyltransferase M (368 aa).

Residues S189, C222–G225, D241, D261, and D278 each bind S-adenosyl-L-methionine. K307 acts as the Proton acceptor in catalysis.

The protein belongs to the class I-like SAM-binding methyltransferase superfamily. RNA methyltransferase RlmE family. RlmM subfamily. Monomer.

The protein localises to the cytoplasm. It carries out the reaction cytidine(2498) in 23S rRNA + S-adenosyl-L-methionine = 2'-O-methylcytidine(2498) in 23S rRNA + S-adenosyl-L-homocysteine + H(+). In terms of biological role, catalyzes the 2'-O-methylation at nucleotide C2498 in 23S rRNA. This chain is Ribosomal RNA large subunit methyltransferase M, found in Yersinia pestis bv. Antiqua (strain Angola).